The sequence spans 63 residues: Protein sigN172 (63 aa).

This Dictyostelium discoideum (Social amoeba) protein is Protein sigN172.